Here is a 152-residue protein sequence, read N- to C-terminus: Small ribosomal subunit protein uS13 (152 aa).

Position 41 is a phosphoserine (Ser-41).

Belongs to the universal ribosomal protein uS13 family.

Its subcellular location is the cytoplasm. Functionally, located at the top of the head of the 40S subunit, it contacts several helices of the 18S rRNA. This Drosophila melanogaster (Fruit fly) protein is Small ribosomal subunit protein uS13 (RpS18).